A 150-amino-acid polypeptide reads, in one-letter code: Deoxyuridine 5'-triphosphate nucleotidohydrolase (150 aa).

Substrate contacts are provided by residues 69-71 (RSG), Asn-82, and 86-88 (LID).

This sequence belongs to the dUTPase family. Mg(2+) serves as cofactor.

The enzyme catalyses dUTP + H2O = dUMP + diphosphate + H(+). Its pathway is pyrimidine metabolism; dUMP biosynthesis; dUMP from dCTP (dUTP route): step 2/2. Its function is as follows. This enzyme is involved in nucleotide metabolism: it produces dUMP, the immediate precursor of thymidine nucleotides and it decreases the intracellular concentration of dUTP so that uracil cannot be incorporated into DNA. The polypeptide is Deoxyuridine 5'-triphosphate nucleotidohydrolase (Methylobacillus flagellatus (strain ATCC 51484 / DSM 6875 / VKM B-1610 / KT)).